We begin with the raw amino-acid sequence, 38 residues long: Potassium channel toxin alpha-KTx 3.7 (38 aa).

3 disulfides stabilise this stretch: cysteine 8–cysteine 28, cysteine 14–cysteine 33, and cysteine 18–cysteine 35.

The protein belongs to the short scorpion toxin superfamily. Potassium channel inhibitor family. Alpha-KTx 03 subfamily. Expressed by the venom gland.

It localises to the secreted. Its function is as follows. Blocks voltage-gated potassium channels Kv1.1/KCNA1 (IC(50)=0.6 nM), Kv1.2/KCNA2 (IC(50)=5.4 nM), Kv1.3/KCNA3 (IC(50)=0.014 nM) potently, and moderately block intermediate conductance calcium-activated potassium channels KCa3.1/KCNN4 (IC(50)=225 nM). Also shows activity on muscle-type nicotinic acetylcholine receptor (nAChR), since it reversibly and dose-dependently inhibits acetylcholine-induced current through mouse muscle-type nAChR heterologously expressed in Xenopus oocytes (IC(50)=1.6 uM). This chain is Potassium channel toxin alpha-KTx 3.7, found in Orthochirus scrobiculosus (Central Asian scorpion).